A 275-amino-acid polypeptide reads, in one-letter code: Pyrroline-5-carboxylate reductase (275 aa).

The protein belongs to the pyrroline-5-carboxylate reductase family.

It localises to the cytoplasm. The enzyme catalyses L-proline + NADP(+) = (S)-1-pyrroline-5-carboxylate + NADPH + 2 H(+). It carries out the reaction L-proline + NAD(+) = (S)-1-pyrroline-5-carboxylate + NADH + 2 H(+). It functions in the pathway amino-acid biosynthesis; L-proline biosynthesis; L-proline from L-glutamate 5-semialdehyde: step 1/1. In terms of biological role, catalyzes the reduction of 1-pyrroline-5-carboxylate (PCA) to L-proline. This Pasteurella multocida (strain Pm70) protein is Pyrroline-5-carboxylate reductase.